The following is a 396-amino-acid chain: MAKKVVTDLDLKNKKVLVRVDFNVPMKDGKITNDNRIVAALPTIEYILEQNGKAILFSHLGKVKTEEDKEGKSLRPVAARLSELLGKEVKFVPTTRGPELEKAVDELKDGEVLLFENTRFEDIDGKKESKNDPELGKYWASLGDVFVNDAFGTAHRAHASNVGIASNLESAAGFLMEKEIKFIGGVVDNPARPLVAILGGAKVSDKIGVIENLLTKADKVLVGGGMTFTFMAAQGQEIGKSLLEADKVELAKGLLEKAGDKLVLPVDAVVSKEFSNDAPFHTVSADSIPADEMGLDIGQATIDLFTKELQGAKTVVWNGPMGVFELSNFAKGTIGVCEAIANLTDATTIIGGGDSAAAAMDLGFADKFTHISTGGGASLEYLEGKELPGVASISDK.

Substrate is bound by residues 21-23 (DFN), R36, 59-62 (HLGK), R119, and R156. ATP-binding positions include K206, G294, E325, and 352 to 355 (GGDS).

Belongs to the phosphoglycerate kinase family. As to quaternary structure, monomer.

It localises to the cytoplasm. It carries out the reaction (2R)-3-phosphoglycerate + ATP = (2R)-3-phospho-glyceroyl phosphate + ADP. Its pathway is carbohydrate degradation; glycolysis; pyruvate from D-glyceraldehyde 3-phosphate: step 2/5. The chain is Phosphoglycerate kinase from Listeria innocua serovar 6a (strain ATCC BAA-680 / CLIP 11262).